Reading from the N-terminus, the 304-residue chain is Ribosomal RNA small subunit methyltransferase H (304 aa).

S-adenosyl-L-methionine contacts are provided by residues 37-39 (GGH), D57, F79, D100, and H107.

Belongs to the methyltransferase superfamily. RsmH family.

The protein localises to the cytoplasm. The catalysed reaction is cytidine(1402) in 16S rRNA + S-adenosyl-L-methionine = N(4)-methylcytidine(1402) in 16S rRNA + S-adenosyl-L-homocysteine + H(+). Its function is as follows. Specifically methylates the N4 position of cytidine in position 1402 (C1402) of 16S rRNA. This chain is Ribosomal RNA small subunit methyltransferase H, found in Phocaeicola vulgatus (strain ATCC 8482 / DSM 1447 / JCM 5826 / CCUG 4940 / NBRC 14291 / NCTC 11154) (Bacteroides vulgatus).